The following is a 72-amino-acid chain: Small ribosomal subunit protein bS20 (72 aa).

Belongs to the bacterial ribosomal protein bS20 family.

Functionally, binds directly to 16S ribosomal RNA. The protein is Small ribosomal subunit protein bS20 (rpsT) of Aeromonas salmonicida.